The following is a 122-amino-acid chain: Ribonuclease P protein component (122 aa).

It belongs to the RnpA family. As to quaternary structure, consists of a catalytic RNA component (M1 or rnpB) and a protein subunit.

It catalyses the reaction Endonucleolytic cleavage of RNA, removing 5'-extranucleotides from tRNA precursor.. Functionally, RNaseP catalyzes the removal of the 5'-leader sequence from pre-tRNA to produce the mature 5'-terminus. It can also cleave other RNA substrates such as 4.5S RNA. The protein component plays an auxiliary but essential role in vivo by binding to the 5'-leader sequence and broadening the substrate specificity of the ribozyme. In Lactobacillus gasseri (strain ATCC 33323 / DSM 20243 / BCRC 14619 / CIP 102991 / JCM 1131 / KCTC 3163 / NCIMB 11718 / NCTC 13722 / AM63), this protein is Ribonuclease P protein component.